Reading from the N-terminus, the 101-residue chain is Urease subunit beta (101 aa).

Belongs to the urease beta subunit family. In terms of assembly, heterotrimer of UreA (gamma), UreB (beta) and UreC (alpha) subunits. Three heterotrimers associate to form the active enzyme.

The protein localises to the cytoplasm. The catalysed reaction is urea + 2 H2O + H(+) = hydrogencarbonate + 2 NH4(+). It participates in nitrogen metabolism; urea degradation; CO(2) and NH(3) from urea (urease route): step 1/1. This chain is Urease subunit beta, found in Burkholderia vietnamiensis (strain G4 / LMG 22486) (Burkholderia cepacia (strain R1808)).